The following is a 414-amino-acid chain: MSSTVTTAHTAGTGSTVITNIAGLVTNSPSFGRGSPRSSKFESGGASPLGLIQDAAVVIDGDRVAWIGESSKAPATDNRVDAGGRAVIPGFVDSHSHLVFAGDRTQEFNARMSGRSYTAGGIRTTVAATRAASDADLEANLTRYLDEALRQGTTTFETKSGYGLTVEDEARALRIASAHTDEVTYLGAHIVPPDYADDPAAYVALVTGEMLDACAPHARWIDVFCEKGAFDGDQARAILTAGRAKGLHPRVHANQLSYGPGVQLAVELDAASADHCTHLTDADVDALASGRTVATLLPGAEFSTRAEWPNARRLLDAGATVALSTDCNPGSSFTSSVPFCIALAVRDMGMTPDEALWSATAGGAAALRREDIGHLTPGAYADLAFLDAPSHVHLAYRPGVPLVSEVWRRGRRVR.

Fe(3+) contacts are provided by histidine 95 and histidine 97. Residues histidine 95 and histidine 97 each coordinate Zn(2+). 4-imidazolone-5-propanoate-binding residues include arginine 104, tyrosine 162, and histidine 189. N-formimidoyl-L-glutamate is bound at residue tyrosine 162. Histidine 252 serves as a coordination point for Fe(3+). Histidine 252 serves as a coordination point for Zn(2+). Position 255 (glutamine 255) interacts with 4-imidazolone-5-propanoate. Aspartate 326 lines the Fe(3+) pocket. Zn(2+) is bound at residue aspartate 326. 2 residues coordinate N-formimidoyl-L-glutamate: asparagine 328 and glycine 330. Serine 331 is a binding site for 4-imidazolone-5-propanoate.

It belongs to the metallo-dependent hydrolases superfamily. HutI family. Zn(2+) is required as a cofactor. Fe(3+) serves as cofactor.

It localises to the cytoplasm. It catalyses the reaction 4-imidazolone-5-propanoate + H2O = N-formimidoyl-L-glutamate. It participates in amino-acid degradation; L-histidine degradation into L-glutamate; N-formimidoyl-L-glutamate from L-histidine: step 3/3. Catalyzes the hydrolytic cleavage of the carbon-nitrogen bond in imidazolone-5-propanoate to yield N-formimidoyl-L-glutamate. It is the third step in the universal histidine degradation pathway. The chain is Imidazolonepropionase from Streptomyces avermitilis (strain ATCC 31267 / DSM 46492 / JCM 5070 / NBRC 14893 / NCIMB 12804 / NRRL 8165 / MA-4680).